The sequence spans 291 residues: U3 small nucleolar ribonucleoprotein protein IMP4 (291 aa).

The 182-residue stretch at 83 to 264 (PKVMITTSRD…LYMIRLGTLE (182 aa)) folds into the Brix domain.

In terms of assembly, part of the small subunit (SSU) processome, composed of more than 70 proteins and the RNA chaperone small nucleolar RNA (snoRNA) U3. Component of a heterotrimeric complex containing IMP3, IMP4 and MPHOSPH10. Interacts with MPHOSPH10.

The protein resides in the nucleus. Its subcellular location is the nucleolus. In terms of biological role, component of the 60-80S U3 small nucleolar ribonucleoprotein (U3 snoRNP). Required for the early cleavages during pre-18S ribosomal RNA processing. Part of the small subunit (SSU) processome, first precursor of the small eukaryotic ribosomal subunit. During the assembly of the SSU processome in the nucleolus, many ribosome biogenesis factors, an RNA chaperone and ribosomal proteins associate with the nascent pre-rRNA and work in concert to generate RNA folding, modifications, rearrangements and cleavage as well as targeted degradation of pre-ribosomal RNA by the RNA exosome. This Pongo abelii (Sumatran orangutan) protein is U3 small nucleolar ribonucleoprotein protein IMP4 (IMP4).